The following is a 35-amino-acid chain: uncharacterized protein (35 aa).

The chain crosses the membrane as a helical span at residues 14–34; the sequence is VVVLLAICGAMLLLRWAAMIW.

It localises to the membrane. This is an uncharacterized protein from Escherichia coli (strain K12).